A 322-amino-acid chain; its full sequence is Aspartate carbamoyltransferase catalytic subunit (322 aa).

Residues Arg65 and Thr66 each coordinate carbamoyl phosphate. Position 93 (Lys93) interacts with L-aspartate. 3 residues coordinate carbamoyl phosphate: Arg115, His143, and Gln146. Arg176 and Arg230 together coordinate L-aspartate. Positions 271 and 272 each coordinate carbamoyl phosphate.

It belongs to the aspartate/ornithine carbamoyltransferase superfamily. ATCase family. In terms of assembly, heterododecamer (2C3:3R2) of six catalytic PyrB chains organized as two trimers (C3), and six regulatory PyrI chains organized as three dimers (R2).

It carries out the reaction carbamoyl phosphate + L-aspartate = N-carbamoyl-L-aspartate + phosphate + H(+). It functions in the pathway pyrimidine metabolism; UMP biosynthesis via de novo pathway; (S)-dihydroorotate from bicarbonate: step 2/3. Catalyzes the condensation of carbamoyl phosphate and aspartate to form carbamoyl aspartate and inorganic phosphate, the committed step in the de novo pyrimidine nucleotide biosynthesis pathway. This chain is Aspartate carbamoyltransferase catalytic subunit, found in Brucella anthropi (strain ATCC 49188 / DSM 6882 / CCUG 24695 / JCM 21032 / LMG 3331 / NBRC 15819 / NCTC 12168 / Alc 37) (Ochrobactrum anthropi).